A 329-amino-acid polypeptide reads, in one-letter code: Glycerol-3-phosphate dehydrogenase [NAD(P)+] (329 aa).

Serine 10, tryptophan 11, arginine 31, and lysine 105 together coordinate NADPH. Positions 105, 134, and 136 each coordinate sn-glycerol 3-phosphate. Residue alanine 138 participates in NADPH binding. Lysine 189, aspartate 242, serine 252, arginine 253, and asparagine 254 together coordinate sn-glycerol 3-phosphate. Lysine 189 functions as the Proton acceptor in the catalytic mechanism. Position 253 (arginine 253) interacts with NADPH. Positions 277 and 279 each coordinate NADPH.

This sequence belongs to the NAD-dependent glycerol-3-phosphate dehydrogenase family.

It localises to the cytoplasm. It carries out the reaction sn-glycerol 3-phosphate + NAD(+) = dihydroxyacetone phosphate + NADH + H(+). The enzyme catalyses sn-glycerol 3-phosphate + NADP(+) = dihydroxyacetone phosphate + NADPH + H(+). It participates in membrane lipid metabolism; glycerophospholipid metabolism. Functionally, catalyzes the reduction of the glycolytic intermediate dihydroxyacetone phosphate (DHAP) to sn-glycerol 3-phosphate (G3P), the key precursor for phospholipid synthesis. The protein is Glycerol-3-phosphate dehydrogenase [NAD(P)+] of Neisseria meningitidis serogroup C (strain 053442).